We begin with the raw amino-acid sequence, 551 residues long: Palmdelphin (551 aa).

At Met-1 the chain carries N-acetylmethionine. A coiled-coil region spans residues 12 to 106 (QAITDKRKIQ…LQISANEEAI (95 aa)). A Glycyl lysine isopeptide (Lys-Gly) (interchain with G-Cter in SUMO2) cross-link involves residue Lys-125. Position 135 is a phosphoserine (Ser-135). Lys-178 is covalently cross-linked (Glycyl lysine isopeptide (Lys-Gly) (interchain with G-Cter in SUMO1); alternate). Lys-178 is covalently cross-linked (Glycyl lysine isopeptide (Lys-Gly) (interchain with G-Cter in SUMO2); alternate). A compositionally biased stretch (basic and acidic residues) spans 247-258 (ERNSKSPTEYHE). The interval 247 to 266 (ERNSKSPTEYHEPVYANPFC) is disordered. Thr-270 is modified (phosphothreonine). Disordered regions lie at residues 294 to 390 (LGNH…TCQE) and 451 to 533 (AEDN…GTED). Phosphoserine is present on residues Ser-321 and Ser-349. The span at 341 to 353 (HTQQKRMASPWEE) shows a compositional bias: polar residues. Positions 354 to 365 (SSNRQNEHEVSP) are enriched in basic and acidic residues. Phosphoserine is present on residues Ser-370, Ser-375, Ser-384, Ser-385, Ser-498, Ser-515, and Ser-520.

The protein belongs to the paralemmin family. In terms of assembly, interacts with GLUL. In terms of processing, phosphorylated. Ubiquitous. Expressed at highest levels in the heart and lung.

The protein resides in the cytoplasm. Its subcellular location is the cell projection. The protein localises to the dendrite. It localises to the dendritic spine. This is Palmdelphin (Palmd) from Mus musculus (Mouse).